Here is a 102-residue protein sequence, read N- to C-terminus: Large ribosomal subunit protein bL21 (102 aa).

The protein belongs to the bacterial ribosomal protein bL21 family. Part of the 50S ribosomal subunit. Contacts protein L20.

Functionally, this protein binds to 23S rRNA in the presence of protein L20. This Pseudarthrobacter chlorophenolicus (strain ATCC 700700 / DSM 12829 / CIP 107037 / JCM 12360 / KCTC 9906 / NCIMB 13794 / A6) (Arthrobacter chlorophenolicus) protein is Large ribosomal subunit protein bL21.